We begin with the raw amino-acid sequence, 499 residues long: Tektin-like protein 1 (499 aa).

Ser-14 bears the Phosphoserine mark. A coiled-coil region spans residues 201-225; that stretch reads WEKKELKSMKRKMEKDMEISEDLLK. Residues 265–286 form a disordered region; sequence VDITRPPTPRTQGLKTPPPDPI. Residues 308 to 328 are a coiled coil; that stretch reads KDILTEMAKNEVDIQNQQQEI. Phosphotyrosine is present on Tyr-372.

Microtubule inner protein component of sperm flagellar doublet microtubules.

Its subcellular location is the cytoplasm. It localises to the cytoskeleton. The protein localises to the flagellum axoneme. Functionally, microtubule inner protein (MIP) part of the dynein-decorated doublet microtubules (DMTs) in sperm flagellar axoneme, which is required for motile flagellum beating. Forms an extensive interaction network cross-linking the lumen of axonemal doublet microtubules. The polypeptide is Tektin-like protein 1 (Mus musculus (Mouse)).